A 206-amino-acid polypeptide reads, in one-letter code: Musculin (206 aa).

A disordered region spans residues 1–115 (MSTGSVSDPE…QSQRNAANAR (115 aa)). Positions 46-56 (SAEEEDPDGEE) are enriched in acidic residues. Positions 71–76 (KRKRPR) match the Nuclear localization signal motif. Residues 78-92 (AGGGGAGGSAGGGGK) are compositionally biased toward gly residues. Low complexity predominate over residues 93 to 102 (KPLPAKGSAA). The 53-residue stretch at 107–159 (SQRNAANARERARMRVLSKAFSRLKTSLPWVPPDTKLSKLDTLRLASSYIAHL) folds into the bHLH domain.

As to quaternary structure, efficient DNA binding requires dimerization with another bHLH protein. Binds DNA as a homodimer or a heterodimer. Forms a heterodimer with TCF3. Expressed in lymphoid tissues, B-cell lines and activated B-cells.

Its subcellular location is the nucleus. In terms of biological role, transcription repressor capable of inhibiting the transactivation capability of TCF3/E47. May play a role in regulating antigen-dependent B-cell differentiation. In Homo sapiens (Human), this protein is Musculin (MSC).